We begin with the raw amino-acid sequence, 904 residues long: Disintegrin and metalloproteinase domain-containing protein 22 (904 aa).

The N-terminal stretch at 1–23 (MQAAAAASFWLLCVLGTCPLARC) is a signal peptide. The propeptide occupies 24–223 (GRAGVASLKG…LKPRLKRRKR (200 aa)). Residues 24–734 (GRAGVASLKG…LSGNGVAGTN (711 aa)) are Extracellular-facing. Asparagine 163 carries an N-linked (GlcNAc...) asparagine glycan. Positions 237-436 (KYIELMIVND…GGGACLFNKP (200 aa)) constitute a Peptidase M12B domain. 17 cysteine pairs are disulfide-bonded: cysteine 347–cysteine 431, cysteine 390–cysteine 415, cysteine 392–cysteine 399, cysteine 445–cysteine 475, cysteine 456–cysteine 472, cysteine 458–cysteine 464, cysteine 471–cysteine 492, cysteine 483–cysteine 489, cysteine 488–cysteine 514, cysteine 501–cysteine 521, cysteine 508–cysteine 540, cysteine 533–cysteine 545, cysteine 552–cysteine 603, cysteine 567–cysteine 633, cysteine 581–cysteine 591, cysteine 598–cysteine 661, and cysteine 655–cysteine 666. The region spanning 442 to 529 (PPECGNGFIE…QCAPNVHKMD (88 aa)) is the Disintegrin domain. A glycan (N-linked (GlcNAc...) asparagine) is linked at asparagine 517. Asparagine 632 carries N-linked (GlcNAc...) asparagine glycosylation. The N-linked (GlcNAc...) asparagine glycan is linked to asparagine 673. The EGF-like domain occupies 673–710 (NFSTCSSSKAGTVCSGNGVCSNELKCVCNRHWTGADCG). 3 disulfide bridges follow: cysteine 677-cysteine 692, cysteine 686-cysteine 698, and cysteine 700-cysteine 709. Residues 735-755 (IIIGIIAGTILVLALILGITA) traverse the membrane as a helical segment. Over 756 to 857 (WGYKNYREQR…RFRPRSNSTE (102 aa)) the chain is Cytoplasmic. Positions 769 to 904 (QGDYVKKPGD…QSARLWETSI (136 aa)) are disordered. Over residues 789 to 808 (GGSTNSASSSKKRSNGLSHS) the composition is skewed to low complexity. 3 positions are modified to phosphoserine: serine 808, lysine 817, and serine 832. Over residues 809 to 827 (WSERIPDTKHISDICENGR) the composition is skewed to basic and acidic residues. The span at 840–851 (NKKKIRGKRFRP) shows a compositional bias: basic residues. Phosphoserine is present on residues serine 855, serine 860, serine 864, serine 868, and methionine 882. A compositionally biased stretch (low complexity) spans 860–875 (SPAKSPSSSTGSIASS).

In terms of assembly, interacts with LGI1. Can bind to LGI4. Interacts with KCNA2, DLG2 and DLG4. Interacts with ADAM11. Interacts (via C-terminus) with YWHAB/14-3-3 beta. Interacts (via C-terminus) with YWHAZ/14-3-3 zeta. Post-translationally, the precursor is cleaved by a furin endopeptidase. Detected in juxtaparanodal zones in the central nervous system and at nerve terminal plexuses of basket cells in the cerebellum (at protein level). Expressed at high levels in the brain. Strongly expressed in cerebellar granule cells and hippocampus. In spinal cord, expression is restricted to gray matter.

The protein resides in the cell membrane. It localises to the cell projection. It is found in the axon. Functionally, probable ligand for integrin in the brain. This is a non catalytic metalloprotease-like protein. Involved in regulation of cell adhesion and spreading and in inhibition of cell proliferation. Neuronal receptor for LGI1. The sequence is that of Disintegrin and metalloproteinase domain-containing protein 22 (Adam22) from Mus musculus (Mouse).